Consider the following 590-residue polypeptide: Urease subunit alpha (590 aa).

Positions 134 to 590 constitute a Urease domain; sequence GGIDSHIHFI…LPLAQRYFLF (457 aa). Ni(2+) contacts are provided by His139, His141, and Lys222. Lys222 bears the N6-carboxylysine mark. His224 lines the substrate pocket. 2 residues coordinate Ni(2+): His251 and His277. Residue His325 is the Proton donor of the active site. Asp365 contacts Ni(2+). A disordered region spans residues 388–416; the sequence is QQRGWLSPPAAGQGAGLSSAAGQGVDHDT. Over residues 393–411 the composition is skewed to low complexity; it reads LSPPAAGQGAGLSSAAGQG.

It belongs to the metallo-dependent hydrolases superfamily. Urease alpha subunit family. Heterotrimer of UreA (gamma), UreB (beta) and UreC (alpha) subunits. Three heterotrimers associate to form the active enzyme. Ni cation is required as a cofactor. In terms of processing, carboxylation allows a single lysine to coordinate two nickel ions.

It is found in the cytoplasm. It catalyses the reaction urea + 2 H2O + H(+) = hydrogencarbonate + 2 NH4(+). Its pathway is nitrogen metabolism; urea degradation; CO(2) and NH(3) from urea (urease route): step 1/1. In Verminephrobacter eiseniae (strain EF01-2), this protein is Urease subunit alpha.